The chain runs to 337 residues: Inositol 2-dehydrogenase (337 aa).

The protein belongs to the Gfo/Idh/MocA family. In terms of assembly, homotetramer.

It carries out the reaction myo-inositol + NAD(+) = scyllo-inosose + NADH + H(+). Its function is as follows. Involved in the oxidation of myo-inositol (MI) to 2-keto-myo-inositol (2KMI or 2-inosose). The protein is Inositol 2-dehydrogenase of Burkholderia ambifaria (strain MC40-6).